We begin with the raw amino-acid sequence, 353 residues long: MSSESSTGPEMSATTKQMLARVRQMVPPMLEKFHKGQLGRVAVIGGSEDYTGAPYFSAMASARLGADLSHVICTPNAAQVIKTYSPNLMVHPLMRSSPPALSSSDSGSSPSRTKSAPDTDPSQIAAQIIPMLDRLHVLVIGPGLGRDPLMQETCAKVITAAREKGIPMVLDADALLLVTKDPSLIKGYDNAVLTPNVVEFGRLTKALGVDEEVEKAEETAGETAKVEALAKALGGVMVVQKGAKDYLSDGKVTLTVDLKGGLKRSGGQGDTLTGSIATFLGWRRAYLEDLWDHGHKLNKEELIGLAVFGGSAITRECSRLAFAKKGRSLQASDLTDEVHTAFLNLFGEVDAKL.

One can recognise a YjeF C-terminal domain in the interval 18-345 (MLARVRQMVP…DEVHTAFLNL (328 aa)). The segment at 95 to 121 (RSSPPALSSSDSGSSPSRTKSAPDTDP) is disordered. Residues 96–114 (SSPPALSSSDSGSSPSRTK) are compositionally biased toward low complexity. Residues Gly143 and 196–202 (NVVEFGR) each bind (6S)-NADPHX. ATP contacts are provided by residues 241–245 (KGAKD) and 260–269 (GGLKRSGGQG). Asp270 contacts (6S)-NADPHX.

It belongs to the NnrD/CARKD family. The cofactor is Mg(2+).

The protein localises to the cytoplasm. The enzyme catalyses (6S)-NADHX + ATP = ADP + phosphate + NADH + H(+). It catalyses the reaction (6S)-NADPHX + ATP = ADP + phosphate + NADPH + H(+). In terms of biological role, catalyzes the dehydration of the S-form of NAD(P)HX at the expense of ATP, which is converted to ADP. Together with NAD(P)HX epimerase, which catalyzes the epimerization of the S- and R-forms, the enzyme allows the repair of both epimers of NAD(P)HX, a damaged form of NAD(P)H that is a result of enzymatic or heat-dependent hydration. In Neurospora crassa (strain ATCC 24698 / 74-OR23-1A / CBS 708.71 / DSM 1257 / FGSC 987), this protein is ATP-dependent (S)-NAD(P)H-hydrate dehydratase.